The chain runs to 321 residues: uncharacterized protein (321 aa).

The residue at position 2 (Val2) is an N-acetylvaline. The disordered stretch occupies residues 37–63 (SEASRLLTPQTSSNHALSKMQKDDDIR). Residues 43-52 (LTPQTSSNHA) are compositionally biased toward polar residues. Thr44 carries the post-translational modification Phosphothreonine. Ser49, Ser69, Ser121, Ser126, Ser129, Ser137, and Ser139 each carry phosphoserine. Disordered regions lie at residues 115-270 (KKQR…YSIS) and 283-321 (ETLE…AQPQ). 3 stretches are compositionally biased toward polar residues: residues 120-145 (KSIN…TSTD), 153-162 (KYSSSGTPEN), and 178-189 (SYGQMIKNNSNR). Phosphothreonine is present on Thr159. The segment covering 204–229 (EIDHTAPEKSEKRQERSGRSFDRQKS) has biased composition (basic and acidic residues). Polar residues predominate over residues 237–253 (LSRSISRGPTKNKTVSP). A phosphoserine mark is found at Ser238, Ser240, Ser242, and Ser270. Positions 284 to 305 (TLEEEQEDAEKEGVLMEDEGNE) are enriched in acidic residues. Over residues 306–315 (EYTKDLEEAA) the composition is skewed to basic and acidic residues.

It localises to the cytoplasm. This is an uncharacterized protein from Saccharomyces cerevisiae (strain ATCC 204508 / S288c) (Baker's yeast).